The following is a 312-amino-acid chain: Aspartate carbamoyltransferase catalytic subunit (312 aa).

Carbamoyl phosphate contacts are provided by Arg-58 and Thr-59. Position 86 (Lys-86) interacts with L-aspartate. Carbamoyl phosphate-binding residues include Arg-108, His-136, and Gln-139. L-aspartate is bound by residues Arg-169 and Arg-223. Residues Gly-264 and Pro-265 each coordinate carbamoyl phosphate.

It belongs to the aspartate/ornithine carbamoyltransferase superfamily. ATCase family. Heterododecamer (2C3:3R2) of six catalytic PyrB chains organized as two trimers (C3), and six regulatory PyrI chains organized as three dimers (R2).

It carries out the reaction carbamoyl phosphate + L-aspartate = N-carbamoyl-L-aspartate + phosphate + H(+). The protein operates within pyrimidine metabolism; UMP biosynthesis via de novo pathway; (S)-dihydroorotate from bicarbonate: step 2/3. Its function is as follows. Catalyzes the condensation of carbamoyl phosphate and aspartate to form carbamoyl aspartate and inorganic phosphate, the committed step in the de novo pyrimidine nucleotide biosynthesis pathway. This Heliobacterium modesticaldum (strain ATCC 51547 / Ice1) protein is Aspartate carbamoyltransferase catalytic subunit.